The primary structure comprises 610 residues: ATP-dependent zinc metalloprotease FtsH (610 aa).

Topologically, residues 1 to 3 (MAK) are cytoplasmic. A helical transmembrane segment spans residues 4-24 (NLMLWLVIAVVLMSIFQNFSA). Topologically, residues 25-97 (NNINNRKIDY…IIGAAPEEQS (73 aa)) are extracellular. A helical transmembrane segment spans residues 98-118 (FFTAIFISWFPMLLLIGVWVF). Topologically, residues 119 to 610 (FMRQMQVGGG…SNICTDDDNN (492 aa)) are cytoplasmic. 192–199 (GPPGTGKT) contributes to the ATP binding site. Histidine 414 contacts Zn(2+). Residue glutamate 415 is part of the active site. Zn(2+) is bound by residues histidine 418 and aspartate 492.

This sequence in the central section; belongs to the AAA ATPase family. It in the C-terminal section; belongs to the peptidase M41 family. Homohexamer. Zn(2+) serves as cofactor.

The protein resides in the cell membrane. Its function is as follows. Acts as a processive, ATP-dependent zinc metallopeptidase for both cytoplasmic and membrane proteins. Plays a role in the quality control of integral membrane proteins. The chain is ATP-dependent zinc metalloprotease FtsH from Buchnera aphidicola subsp. Baizongia pistaciae (strain Bp).